A 170-amino-acid polypeptide reads, in one-letter code: MDALKPFLPEAKGVLPYYMIILSIISIGNSLQAYTTLHFSRRVYNGRFIRNPKLPSKTNNFEPEDQTNKLIPAQNDPKATDQLTPLAGRLFGTWTLITCIVRCYAAYNLHIGPVYTLAYWTYIVAFSHFASELFVFKTMTFGLPQYFPFALASTSLIWMPLVRDHYVQYN.

Helical transmembrane passes span 7 to 27 (FLPE…IISI), 116 to 136 (TLAY…LFVF), and 141 to 161 (FGLP…WMPL).

It belongs to the ERG28 family. As to quaternary structure, heterotetramer of ERG25, ERG26, ERG27 and ERG28. ERG28 acts as a scaffold to tether ERG27 and other 4,4-demethylation-related enzymes, forming a demethylation enzyme complex, in the endoplasmic reticulum.

The protein localises to the endoplasmic reticulum membrane. It participates in steroid metabolism; ergosterol biosynthesis. In terms of biological role, sterol 24-C-methyltransferase; part of the third module of ergosterol biosynthesis pathway that includes the late steps of the pathway. ERG28 has a role as a scaffold to help anchor the catalytic components of the C-4 demethylation complex ERG25, ERG26 and ERG27 to the endoplasmic reticulum. The third module or late pathway involves the ergosterol synthesis itself through consecutive reactions that mainly occur in the endoplasmic reticulum (ER) membrane. Firstly, the squalene synthase ERG9 catalyzes the condensation of 2 farnesyl pyrophosphate moieties to form squalene, which is the precursor of all steroids. Squalene synthase is crucial for balancing the incorporation of farnesyl diphosphate (FPP) into sterol and nonsterol isoprene synthesis. Secondly, squalene is converted into lanosterol by the consecutive action of the squalene epoxidase ERG1 and the lanosterol synthase ERG7. Then, the delta(24)-sterol C-methyltransferase ERG6 methylates lanosterol at C-24 to produce eburicol. Eburicol is the substrate of the sterol 14-alpha demethylase encoded by CYP51A, CYP51B and CYP51C, to yield 4,4,24-trimethyl ergosta-8,14,24(28)-trienol. CYP51B encodes the enzyme primarily responsible for sterol 14-alpha-demethylation, and plays an essential role in ascospore formation. CYP51A encodes an additional sterol 14-alpha-demethylase, induced on ergosterol depletion and responsible for the intrinsic variation in azole sensitivity. The third CYP51 isoform, CYP51C, does not encode a sterol 14-alpha-demethylase, but is required for full virulence on host wheat ears. The C-14 reductase ERG24 then reduces the C14=C15 double bond which leads to 4,4-dimethylfecosterol. A sequence of further demethylations at C-4, involving the C-4 demethylation complex containing the C-4 methylsterol oxidases ERG25, the sterol-4-alpha-carboxylate 3-dehydrogenase ERG26 and the 3-keto-steroid reductase ERG27, leads to the production of fecosterol via 4-methylfecosterol. ERG28 has a role as a scaffold to help anchor ERG25, ERG26 and ERG27 to the endoplasmic reticulum. The C-8 sterol isomerase ERG2 then catalyzes the reaction which results in unsaturation at C-7 in the B ring of sterols and thus converts fecosterol to episterol. The sterol-C5-desaturases ERG3A and ERG3BB then catalyze the introduction of a C-5 double bond in the B ring to produce 5-dehydroepisterol. The C-22 sterol desaturases ERG5A and ERG5B further convert 5-dehydroepisterol into ergosta-5,7,22,24(28)-tetraen-3beta-ol by forming the C-22(23) double bond in the sterol side chain. Finally, ergosta-5,7,22,24(28)-tetraen-3beta-ol is substrate of the C-24(28) sterol reductase ERG4 to produce ergosterol. The protein is Ergosterol biosynthetic protein 28 of Gibberella zeae (strain ATCC MYA-4620 / CBS 123657 / FGSC 9075 / NRRL 31084 / PH-1) (Wheat head blight fungus).